Reading from the N-terminus, the 499-residue chain is Nuclear receptor-binding protein 2 (499 aa).

The interval 1-31 is disordered; sequence MAAPEPAPRRGREREREDESEDESDILEESP. Residues 7-17 show a composition bias toward basic and acidic residues; it reads APRRGRERERE. Residues 18-28 are compositionally biased toward acidic residues; it reads DESEDESDILE. In terms of domain architecture, Protein kinase spans 36–304; it reads QKRREQVNQG…AHNLLFHRVL (269 aa). Positions 396–416 are disordered; it reads APPPEEAQKAKTPTPEPFDSE. Residues Thr-407 and Thr-409 each carry the phosphothreonine modification.

Belongs to the protein kinase superfamily. Ser/Thr protein kinase family. Expressed in Purkinje cells of the cerebellum and neurons in the CA3 region of the hippocampus. Also detected in non-neural tissues including mesenchymal layer adjacent to epithelium in developing bronchi of the lung, the epithelium of the stomach as well as cells in the liver.

It is found in the cytoplasm. Functionally, may regulate apoptosis of neural progenitor cells during their differentiation. The polypeptide is Nuclear receptor-binding protein 2 (Mus musculus (Mouse)).